The primary structure comprises 739 residues: NAD(P)H-quinone oxidoreductase subunit 5, chloroplastic (739 aa).

16 helical membrane-spanning segments follow: residues 9–29, 39–59, 89–109, 125–145, 147–167, 185–205, 219–239, 258–278, 280–300, 327–347, 354–374, 396–416, 425–445, 542–562, 610–630, and 719–739; these read WVIP…LILI, IWAF…VQLS, IDPL…LVLI, FVYI…SNLI, IYFF…FWFT, GDFG…SLEF, NGIN…GAVA, TPIS…FLLA, LLPL…VGTI, LGYM…FHLI, ALLF…VGYS, TTFL…CFWS, WLYS…TAFY, LFPL…GISF, TLAI…YSFF, and ISSY…FFLS.

It belongs to the complex I subunit 5 family. As to quaternary structure, NDH is composed of at least 16 different subunits, 5 of which are encoded in the nucleus.

The protein localises to the plastid. It is found in the chloroplast thylakoid membrane. The catalysed reaction is a plastoquinone + NADH + (n+1) H(+)(in) = a plastoquinol + NAD(+) + n H(+)(out). The enzyme catalyses a plastoquinone + NADPH + (n+1) H(+)(in) = a plastoquinol + NADP(+) + n H(+)(out). NDH shuttles electrons from NAD(P)H:plastoquinone, via FMN and iron-sulfur (Fe-S) centers, to quinones in the photosynthetic chain and possibly in a chloroplast respiratory chain. The immediate electron acceptor for the enzyme in this species is believed to be plastoquinone. Couples the redox reaction to proton translocation, and thus conserves the redox energy in a proton gradient. In Hordeum vulgare (Barley), this protein is NAD(P)H-quinone oxidoreductase subunit 5, chloroplastic (ndhF).